Here is a 622-residue protein sequence, read N- to C-terminus: Palmitoyltransferase ZDHHC17 (622 aa).

Over 1-294 (MADGPDEYDT…LKADKEFRQK (294 aa)) the chain is Cytoplasmic. Residues 1 to 295 (MADGPDEYDT…KADKEFRQKV (295 aa)) are necessary and sufficient for interaction with DNAJC5 and SNAP25. ANK repeat units lie at residues 41–76 (THVD…VRQP), 79–108 (ENVT…IVDQ), 113–142 (LNST…DPSL), 146–175 (EGCS…DVDM), 179–209 (NGMT…SVNL), 214–243 (HKNT…NVDA), and 247–276 (KGES…AKGY). 2 consecutive transmembrane segments (helical) span residues 295–315 (VMLG…DLNI) and 316–336 (DSWL…QFLS). The Lumenal portion of the chain corresponds to 337-347 (KSFFDHSMHSA). Residues 348 to 368 (LPLGIYLATKFWMYVTWFFWF) form a helical membrane-spanning segment. Residues 369–371 (WND) lie on the Cytoplasmic side of the membrane. A helical membrane pass occupies residues 372–392 (LSFLSIHLPFLANSVALFYNF). Residues 393-470 (GKSWKSDPGI…GNCVGAGNHR (78 aa)) lie on the Lumenal side of the membrane. Positions 427 to 477 (IFCSTCLIRKPVRSKHCGVCNRCIAKFDHHCPWVGNCVGAGNHRYFMGYLF) constitute a DHHC domain. Cys457 acts as the S-palmitoyl cysteine intermediate in catalysis. The chain crosses the membrane as a helical span at residues 471-491 (YFMGYLFFLLFMICWMIYGCV). Over 492–506 (SYWGLHCETTYTKDG) the chain is Cytoplasmic. A helical membrane pass occupies residues 507–526 (FWTYITQIATCSPWMFWMFL). Topologically, residues 527–529 (NSV) are lumenal. A helical transmembrane segment spans residues 530 to 552 (FHFMWVAVLLMCQMYQITCLGIT). Residues 553–622 (TNERMNARRY…QISGSGYQLV (70 aa)) lie on the Cytoplasmic side of the membrane.

This sequence belongs to the DHHC palmitoyltransferase family. AKR/ZDHHC17 subfamily. Interacts (via ANK repeats) with numerous proteins (via the consensus sequence motif [VIAP]-[VIT]-x-x-Q-P). Interacts (via ANK repeats) with CLIP3. Interacts (via ANK repeats) with HTT. Interacts (via ANK repeats) with DNAJC5 (via C-terminus). Interacts (via ANK repeats) with MAP6. Interacts (via ANK repeats) with SNAP23. Interacts (via ANK repeats) with SNAP25. Interacts (via ANK repeats) with EVL. Interacts with SPRED1 and SPRED3. Interacts with GPM6A and OPTN. May interact (via ANK repeats) with SPRED2. May interact with NTRK1; may regulate its localization and function. Autopalmitoylated. Autopalmitoylation has a regulatory role in ZDHHC17-mediated Mg(2+) transport.

Its subcellular location is the golgi apparatus membrane. The protein resides in the cytoplasmic vesicle membrane. It localises to the presynaptic cell membrane. The catalysed reaction is L-cysteinyl-[protein] + hexadecanoyl-CoA = S-hexadecanoyl-L-cysteinyl-[protein] + CoA. It carries out the reaction L-cysteinyl-[protein] + tetradecanoyl-CoA = S-tetradecanoyl-L-cysteinyl-[protein] + CoA. It catalyses the reaction L-cysteinyl-[protein] + octadecanoyl-CoA = S-octadecanoyl-L-cysteinyl-[protein] + CoA. In terms of biological role, palmitoyltransferase that catalyzes the addition of palmitate onto various protein substrates and is involved in a variety of cellular processes. Has no stringent fatty acid selectivity and in addition to palmitate can also transfer onto target proteins myristate from tetradecanoyl-CoA and stearate from octadecanoyl-CoA. Palmitoyltransferase specific for a subset of neuronal proteins, including SNAP25, DLG4/PSD95, GAD2, SYT1 and HTT. Also palmitoylates neuronal protein GPM6A as well as SPRED1 and SPRED3. Could also play a role in axonogenesis through the regulation of NTRK1 and the downstream ERK1/ERK2 signaling cascade. May be involved in the sorting or targeting of critical proteins involved in the initiating events of endocytosis at the plasma membrane. May play a role in Mg(2+) transport. Could also palmitoylate DNAJC5 and regulate its localization to the Golgi membrane. Palmitoylates CASP6, thereby preventing its dimerization and subsequent activation. The polypeptide is Palmitoyltransferase ZDHHC17 (Rattus norvegicus (Rat)).